Here is a 457-residue protein sequence, read N- to C-terminus: Siroheme synthase (457 aa).

Residues methionine 1–threonine 204 form a precorrin-2 dehydrogenase /sirohydrochlorin ferrochelatase region. Residues aspartate 22–valine 23 and leucine 43–alanine 44 each bind NAD(+). Serine 128 carries the phosphoserine modification. A uroporphyrinogen-III C-methyltransferase region spans residues glycine 216–histidine 457. Position 225 (proline 225) interacts with S-adenosyl-L-methionine. The Proton acceptor role is filled by aspartate 248. Lysine 270 serves as the catalytic Proton donor. S-adenosyl-L-methionine is bound by residues glycine 301–aspartate 303, isoleucine 306, threonine 331–alanine 332, methionine 382, and glycine 411.

The protein in the N-terminal section; belongs to the precorrin-2 dehydrogenase / sirohydrochlorin ferrochelatase family. In the C-terminal section; belongs to the precorrin methyltransferase family.

The catalysed reaction is uroporphyrinogen III + 2 S-adenosyl-L-methionine = precorrin-2 + 2 S-adenosyl-L-homocysteine + H(+). It catalyses the reaction precorrin-2 + NAD(+) = sirohydrochlorin + NADH + 2 H(+). The enzyme catalyses siroheme + 2 H(+) = sirohydrochlorin + Fe(2+). It functions in the pathway cofactor biosynthesis; adenosylcobalamin biosynthesis; precorrin-2 from uroporphyrinogen III: step 1/1. It participates in cofactor biosynthesis; adenosylcobalamin biosynthesis; sirohydrochlorin from precorrin-2: step 1/1. Its pathway is porphyrin-containing compound metabolism; siroheme biosynthesis; precorrin-2 from uroporphyrinogen III: step 1/1. The protein operates within porphyrin-containing compound metabolism; siroheme biosynthesis; siroheme from sirohydrochlorin: step 1/1. It functions in the pathway porphyrin-containing compound metabolism; siroheme biosynthesis; sirohydrochlorin from precorrin-2: step 1/1. Its function is as follows. Multifunctional enzyme that catalyzes the SAM-dependent methylations of uroporphyrinogen III at position C-2 and C-7 to form precorrin-2 via precorrin-1. Then it catalyzes the NAD-dependent ring dehydrogenation of precorrin-2 to yield sirohydrochlorin. Finally, it catalyzes the ferrochelation of sirohydrochlorin to yield siroheme. The sequence is that of Siroheme synthase from Shigella boydii serotype 18 (strain CDC 3083-94 / BS512).